A 501-amino-acid chain; its full sequence is Postreplication repair E3 ubiquitin-protein ligase rad18 (501 aa).

Residues 34 to 72 form an RING-type zinc finger; sequence CHVCKDFYDSPMLTSCNHTFCSLCIRRCLSVDSKCPLCR. The interval 111 to 154 is disordered; the sequence is QAILPDQAGPSSPSKRKATEMEGPKEEDPESKRPRRSTRSTRAR. The span at 127-142 shows a compositional bias: basic and acidic residues; that stretch reads KATEMEGPKEEDPESK. The span at 143–152 shows a compositional bias: basic residues; it reads RPRRSTRSTR. A UBZ4-type zinc finger spans residues 186–214; sequence LVACPICLTRMKEQQVDRHLDTSCPGSPQ. Positions 189, 192, 204, and 209 each coordinate Zn(2+). Residues 203–250 are disordered; that stretch reads RHLDTSCPGSPQAASKRRPIPAQTPQPSTFPSFNTRLTSQTNQKPPER. A compositionally biased stretch (polar residues) spans 225-246; that stretch reads QTPQPSTFPSFNTRLTSQTNQK. One can recognise an SAP domain in the interval 256–290; sequence YSMLRDTALRKKLSELGLSTHGSRQLLEKRHKEWI. Residues 377–501 are disordered; the sequence is IKRQTLDGNG…GMKKPNPETC (125 aa).

The protein belongs to the RAD18 family. As to quaternary structure, interacts with E2 mus-8/ubc2, forming a complex with ubiquitin ligase activity.

Its subcellular location is the nucleus. The enzyme catalyses S-ubiquitinyl-[E2 ubiquitin-conjugating enzyme]-L-cysteine + [acceptor protein]-L-lysine = [E2 ubiquitin-conjugating enzyme]-L-cysteine + N(6)-ubiquitinyl-[acceptor protein]-L-lysine.. It functions in the pathway protein modification; protein ubiquitination. In terms of biological role, E3 RING-finger protein, member of the UBC2/RAD6 epistasis group. Associates to the E2 ubiquitin conjugating enzyme mus-8/ubc2 to form the mus-8/ubc2-uvs-2/rad18 ubiquitin ligase complex involved in postreplicative repair (PRR) of damaged DNA. This is Postreplication repair E3 ubiquitin-protein ligase rad18 (uvs-2) from Neurospora crassa (strain ATCC 24698 / 74-OR23-1A / CBS 708.71 / DSM 1257 / FGSC 987).